The primary structure comprises 347 residues: Protein RecA (347 aa).

68-75 (GPESSGKT) is an ATP binding site.

Belongs to the RecA family.

It localises to the cytoplasm. Can catalyze the hydrolysis of ATP in the presence of single-stranded DNA, the ATP-dependent uptake of single-stranded DNA by duplex DNA, and the ATP-dependent hybridization of homologous single-stranded DNAs. It interacts with LexA causing its activation and leading to its autocatalytic cleavage. This is Protein RecA from Rhodococcus jostii (strain RHA1).